The following is a 312-amino-acid chain: Taste receptor type 2 member 103 (312 aa).

Over 1–16 (MVVTMRAALRLMLIST) the chain is Extracellular. A helical membrane pass occupies residues 17–37 (VSLELIIGILANVFIALVNII). Residues 38-65 (DWIKRGKISAVDKIYMGLAISRTAFVLS) are Cytoplasmic-facing. The helical transmembrane segment at 66–86 (VITGFLIAFLDPASLGIGIMI) threads the bilayer. Topologically, residues 87–92 (RLLTMS) are extracellular. A helical membrane pass occupies residues 93 to 113 (WTVTNHFSVWFATCLSIFYFL). Topologically, residues 114-133 (KITNFSNTVFLALKWKVKKV) are cytoplasmic. Residues 134–154 (VSVTLVVSLIILFINVIVIHI) form a helical membrane-spanning segment. The Extracellular portion of the chain corresponds to 155-184 (YTDRFQVNMVQKCGANNTLRAYGLFLSIST). The N-linked (GlcNAc...) asparagine glycan is linked to Asn-170. The chain crosses the membrane as a helical span at residues 185-205 (VFTFIPFTASLTMFLLLIFSL). Residues 206 to 229 (WRHLKTMHHNATGSRDVSTVAHIK) lie on the Cytoplasmic side of the membrane. Residues 230 to 250 (GLQTVVAFLLLYTVFAMSLFS) form a helical membrane-spanning segment. At 251 to 264 (QSLSIDAQHTNLLS) the chain is on the extracellular side. Residues 265-285 (HFLRCIGVAFPSGHSCALILG) form a helical membrane-spanning segment. Residues 286 to 312 (NNKLRQASLSVIFWLRCKYKHTENQGP) lie on the Cytoplasmic side of the membrane.

This sequence belongs to the G-protein coupled receptor T2R family.

The protein resides in the membrane. Functionally, gustducin-coupled receptor implicated in the perception of bitter compounds in the oral cavity and the gastrointestinal tract. Signals through PLCB2 and the calcium-regulated cation channel TRPM5. The polypeptide is Taste receptor type 2 member 103 (Rattus norvegicus (Rat)).